The following is a 334-amino-acid chain: MLCRLGGRWLRPLPALQLWARDPPLAPVPTSGAKRPTLPVWAVTPVSAVHANGWYEALAASSPVRVAEEVLLGVHAATGLPWWGSIPLSTAALRGAVTLPLAAYQHYILAKVENLQPEIKTIARHLNQEVAVRANQLGWSKRDARLTYLKNMRRLISELYVRDNCHPFKATVLVWIQLPMWIFMSFALRNLSTGAAHSEAGFSVEEQLAAGGILWFSDLTAPDPTWILPVSLGVINLLIVEICVLQKIGMSRFQTYITYFVRAMSVLMIPIAATVPSSIVLYWLCSSFVGLSQNLLLRSPGFRQLCRIPSTKSDSETPYKDIFAAFNTKFISRK.

Residues 168–188 form a helical membrane-spanning segment; it reads FKATVLVWIQLPMWIFMSFAL. At 189–224 the chain is on the mitochondrial matrix side; it reads RNLSTGAAHSEAGFSVEEQLAAGGILWFSDLTAPDP. A helical membrane pass occupies residues 225 to 245; that stretch reads TWILPVSLGVINLLIVEICVL. At 246 to 263 the chain is on the mitochondrial intermembrane side; sequence QKIGMSRFQTYITYFVRA. The chain crosses the membrane as a helical span at residues 264–284; it reads MSVLMIPIAATVPSSIVLYWL. At 285–334 the chain is on the mitochondrial matrix side; sequence CSSFVGLSQNLLLRSPGFRQLCRIPSTKSDSETPYKDIFAAFNTKFISRK.

The protein belongs to the OXA1/ALB3/YidC family. Found in a complex with TMEM177, COA6, MT-CO2/COX2, COX20, SCO1 and SCO2. Interacts transiently with MT-CO2/COX2 during its maturation. Interacts with COX20 in a MT-CO2/COX2-dependent manner.

The protein resides in the mitochondrion inner membrane. Functionally, mitochondrial membrane insertase required for the translocation of the C-terminus of cytochrome c oxidase subunit II (MT-CO2/COX2) across the mitochondrial inner membrane. Plays a role in MT-CO2/COX2 maturation following the COX20-mediated stabilization of newly synthesized MT-CO2/COX2 protein and before the action of the metallochaperones SCO1/2. Essential for the assembly and stability of the mitochondrial respiratory chain complex IV (also known as cytochrome c oxidase). In Pongo abelii (Sumatran orangutan), this protein is Cytochrome c oxidase assembly protein COX18, mitochondrial (COX18).